Here is a 128-residue protein sequence, read N- to C-terminus: Small ribosomal subunit protein uS11 (128 aa).

Belongs to the universal ribosomal protein uS11 family. Part of the 30S ribosomal subunit. Interacts with proteins S7 and S18. Binds to IF-3.

In terms of biological role, located on the platform of the 30S subunit, it bridges several disparate RNA helices of the 16S rRNA. Forms part of the Shine-Dalgarno cleft in the 70S ribosome. This is Small ribosomal subunit protein uS11 from Solidesulfovibrio magneticus (strain ATCC 700980 / DSM 13731 / RS-1) (Desulfovibrio magneticus).